The chain runs to 243 residues: Adenosylcobinamide-GDP ribazoletransferase (243 aa).

Helical transmembrane passes span 8-28 (WLGAIAFYTCLPISPRWPIQL), 36-56 (PWVGLVLGGMLWGVQWLLDFL), 58-78 (VPSPVASAVLVALWLALTGGL), 107-127 (AGAFGVMAAMVILLLKVTSLS), 131-151 (KGSVLVWVLVLGRLAQVWAIA), 187-207 (FLLPLPLGQLLFGLLLILLIP), and 222-242 (YGAVVEWTEALLLVAFTVGSA).

The protein belongs to the CobS family. The cofactor is Mg(2+).

The protein resides in the cell inner membrane. It catalyses the reaction alpha-ribazole + adenosylcob(III)inamide-GDP = adenosylcob(III)alamin + GMP + H(+). It carries out the reaction alpha-ribazole 5'-phosphate + adenosylcob(III)inamide-GDP = adenosylcob(III)alamin 5'-phosphate + GMP + H(+). It functions in the pathway cofactor biosynthesis; adenosylcobalamin biosynthesis; adenosylcobalamin from cob(II)yrinate a,c-diamide: step 7/7. Its function is as follows. Joins adenosylcobinamide-GDP and alpha-ribazole to generate adenosylcobalamin (Ado-cobalamin). Also synthesizes adenosylcobalamin 5'-phosphate from adenosylcobinamide-GDP and alpha-ribazole 5'-phosphate. In Thermosynechococcus vestitus (strain NIES-2133 / IAM M-273 / BP-1), this protein is Adenosylcobinamide-GDP ribazoletransferase.